A 176-amino-acid chain; its full sequence is ATP-dependent protease subunit HslV (176 aa).

Thr2 is a catalytic residue. Ser157, Cys160, and Thr163 together coordinate Na(+).

This sequence belongs to the peptidase T1B family. HslV subfamily. A double ring-shaped homohexamer of HslV is capped on each side by a ring-shaped HslU homohexamer. The assembly of the HslU/HslV complex is dependent on binding of ATP.

It localises to the cytoplasm. It carries out the reaction ATP-dependent cleavage of peptide bonds with broad specificity.. With respect to regulation, allosterically activated by HslU binding. Its function is as follows. Protease subunit of a proteasome-like degradation complex believed to be a general protein degrading machinery. The protein is ATP-dependent protease subunit HslV of Buchnera aphidicola subsp. Baizongia pistaciae (strain Bp).